The chain runs to 249 residues: uncharacterized protein (249 aa).

This is an uncharacterized protein from Methanocaldococcus jannaschii (strain ATCC 43067 / DSM 2661 / JAL-1 / JCM 10045 / NBRC 100440) (Methanococcus jannaschii).